The chain runs to 396 residues: Phosphoglycerate kinase (396 aa).

Residues D21–N23, R36, H59–R62, R113, and R146 contribute to the substrate site. ATP-binding positions include K197, E319, and G345–T348.

The protein belongs to the phosphoglycerate kinase family. In terms of assembly, monomer.

Its subcellular location is the cytoplasm. The enzyme catalyses (2R)-3-phosphoglycerate + ATP = (2R)-3-phospho-glyceroyl phosphate + ADP. It functions in the pathway carbohydrate degradation; glycolysis; pyruvate from D-glyceraldehyde 3-phosphate: step 2/5. The polypeptide is Phosphoglycerate kinase (Legionella pneumophila (strain Lens)).